Reading from the N-terminus, the 122-residue chain is Large ribosomal subunit protein bL12 (122 aa).

This sequence belongs to the bacterial ribosomal protein bL12 family. As to quaternary structure, homodimer. Part of the ribosomal stalk of the 50S ribosomal subunit. Forms a multimeric L10(L12)X complex, where L10 forms an elongated spine to which 2 to 4 L12 dimers bind in a sequential fashion. Binds GTP-bound translation factors.

Forms part of the ribosomal stalk which helps the ribosome interact with GTP-bound translation factors. Is thus essential for accurate translation. The chain is Large ribosomal subunit protein bL12 from Streptococcus sanguinis (strain SK36).